The chain runs to 894 residues: Valine--tRNA ligase (894 aa).

The short motif at 48–58 (PNVTGFLHMGH) is the 'HIGH' region element. The 'KMSKS' region signature appears at 527-531 (KMSKS). Position 530 (Lys-530) interacts with ATP. Positions 827-852 (LVDFDEEVKRINKSIEKLTRDIGMLS) form a coiled coil.

Belongs to the class-I aminoacyl-tRNA synthetase family. ValS type 1 subfamily. In terms of assembly, monomer.

It localises to the cytoplasm. It carries out the reaction tRNA(Val) + L-valine + ATP = L-valyl-tRNA(Val) + AMP + diphosphate. Catalyzes the attachment of valine to tRNA(Val). As ValRS can inadvertently accommodate and process structurally similar amino acids such as threonine, to avoid such errors, it has a 'posttransfer' editing activity that hydrolyzes mischarged Thr-tRNA(Val) in a tRNA-dependent manner. This is Valine--tRNA ligase from Bdellovibrio bacteriovorus (strain ATCC 15356 / DSM 50701 / NCIMB 9529 / HD100).